The sequence spans 310 residues: p-hydroxybenzoic acid efflux pump subunit AaeA (310 aa).

The chain crosses the membrane as a helical span at residues 12–32; the sequence is AITVILVILAFVAIFRAWVYY.

The protein belongs to the membrane fusion protein (MFP) (TC 8.A.1) family.

The protein localises to the cell inner membrane. Forms an efflux pump with AaeB. This is p-hydroxybenzoic acid efflux pump subunit AaeA from Klebsiella pneumoniae (strain 342).